The primary structure comprises 366 residues: tRNA/tmRNA (uracil-C(5))-methyltransferase (366 aa).

Residues glutamine 190, tyrosine 218, asparagine 223, glutamate 239, and aspartate 299 each coordinate S-adenosyl-L-methionine. Cysteine 324 serves as the catalytic Nucleophile. Glutamate 358 functions as the Proton acceptor in the catalytic mechanism.

The protein belongs to the class I-like SAM-binding methyltransferase superfamily. RNA M5U methyltransferase family. TrmA subfamily.

The enzyme catalyses uridine(54) in tRNA + S-adenosyl-L-methionine = 5-methyluridine(54) in tRNA + S-adenosyl-L-homocysteine + H(+). It carries out the reaction uridine(341) in tmRNA + S-adenosyl-L-methionine = 5-methyluridine(341) in tmRNA + S-adenosyl-L-homocysteine + H(+). Functionally, dual-specificity methyltransferase that catalyzes the formation of 5-methyluridine at position 54 (m5U54) in all tRNAs, and that of position 341 (m5U341) in tmRNA (transfer-mRNA). In Shigella boydii serotype 18 (strain CDC 3083-94 / BS512), this protein is tRNA/tmRNA (uracil-C(5))-methyltransferase.